Reading from the N-terminus, the 150-residue chain is uncharacterized protein (150 aa).

Positions 1 to 21 (MAMEMAMMGLLGTVVGASAMG) are cleaved as a signal peptide.

This is an uncharacterized protein from Mycobacterium tuberculosis (strain CDC 1551 / Oshkosh).